Reading from the N-terminus, the 428-residue chain is Aerobic C4-dicarboxylate transport protein (428 aa).

A run of 9 helical transmembrane segments spans residues Leu5–Tyr27, Met47–Met64, Ala77–Val99, Val141–Ala163, Val184–Phe206, Leu216–Leu238, Val289–Met311, Ile326–Gly348, and Val353–Ile375.

The protein belongs to the dicarboxylate/amino acid:cation symporter (DAACS) (TC 2.A.23) family.

It localises to the cell inner membrane. Responsible for the transport of dicarboxylates such as succinate, fumarate, and malate from the periplasm across the membrane. This is Aerobic C4-dicarboxylate transport protein from Salmonella typhi.